The following is a 187-amino-acid chain: Hypoxanthine/guanine phosphoribosyltransferase (187 aa).

This sequence belongs to the purine/pyrimidine phosphoribosyltransferase family. Archaeal HPRT subfamily. In terms of assembly, homodimer.

It is found in the cytoplasm. The enzyme catalyses IMP + diphosphate = hypoxanthine + 5-phospho-alpha-D-ribose 1-diphosphate. It catalyses the reaction GMP + diphosphate = guanine + 5-phospho-alpha-D-ribose 1-diphosphate. It functions in the pathway purine metabolism; IMP biosynthesis via salvage pathway; IMP from hypoxanthine: step 1/1. Catalyzes a salvage reaction resulting in the formation of IMP that is energically less costly than de novo synthesis. The polypeptide is Hypoxanthine/guanine phosphoribosyltransferase (Methanopyrus kandleri (strain AV19 / DSM 6324 / JCM 9639 / NBRC 100938)).